We begin with the raw amino-acid sequence, 525 residues long: Sterol O-acyltransferase 2 (525 aa).

2 disordered regions span residues methionine 1–threonine 34 and glutamine 77–proline 97. At methionine 1–phenylalanine 119 the chain is on the cytoplasmic side. Residues arginine 9 to arginine 23 show a composition bias toward basic and acidic residues. A cholesterol-binding site is contributed by histidine 118. A helical transmembrane segment spans residues arginine 120–aspartate 141. The Lumenal portion of the chain corresponds to phenylalanine 142–glutamine 161. The chain crosses the membrane as a helical span at residues leucine 162 to tryptophan 187. The Cytoplasmic portion of the chain corresponds to alanine 188–glycine 199. Residues alanine 200–valine 223 form a helical membrane-spanning segment. The Lumenal portion of the chain corresponds to arginine 224–serine 231. The chain crosses the membrane as a helical span at residues arginine 232 to proline 255. Residues glycine 256 to arginine 296 lie on the Cytoplasmic side of the membrane. Cysteine 280 bears the Cysteine sulfenic acid (-SOH); alternate mark. Residue cysteine 280 forms a Glycyl cysteine thioester (Cys-Gly) (interchain with G-Cter in ubiquitin); alternate linkage. A helical transmembrane segment spans residues tryptophan 297–methionine 329. Residues serine 330 to alanine 346 are Lumenal-facing. Residues threonine 347–methionine 372 traverse the membrane as a helical segment. Residues leucine 373 to arginine 420 lie on the Cytoplasmic side of the membrane. Positions phenylalanine 380 to asparagine 386 match the FYXDWWN motif motif. Residues asparagine 392, arginine 395, asparagine 398, histidine 402, tyrosine 410, and serine 433 each coordinate an acyl-CoA. Residues alanine 421–leucine 445 traverse the membrane as a helical segment. Histidine 437 is an active-site residue. Residues glycine 446 to valine 451 are Lumenal-facing. A helical transmembrane segment spans residues methionine 452–methionine 467. Topologically, residues asparagine 468–glycine 473 are cytoplasmic. The chain crosses the membrane as a helical span at residues proline 474–cysteine 505. Residues proline 506–proline 525 lie on the Lumenal side of the membrane.

This sequence belongs to the membrane-bound acyltransferase family. Sterol o-acyltransferase subfamily. In terms of assembly, may form homo- or heterodimers. Interacts with INSIG1; the interaction is direct and promotes association with AMFR/gp78. Post-translationally, polyubiquitinated by AMFR/gp78 at Cys-280, leading to its degradation when the lipid levels are low. Association with AMFR/gp78 is mediated via interaction with INSIG1. High concentration of cholesterol and fatty acid results in Cys-280 oxidation, preventing ubiquitination at the same site, resulting in protein stabilization. In terms of processing, oxidized at Cys-280: high concentration of cholesterol and fatty acid induce reactive oxygen species, which oxidizes Cys-280, preventing ubiquitination at the same site, and resulting in protein stabilization.

The protein localises to the endoplasmic reticulum membrane. It carries out the reaction a sterol + a long-chain fatty acyl-CoA = a long-chain 3-hydroxysterol ester + CoA. The catalysed reaction is cholesterol + an acyl-CoA = a cholesterol ester + CoA. It catalyses the reaction cholesterol + (9Z)-octadecenoyl-CoA = cholesteryl (9Z-octadecenoate) + CoA. The enzyme catalyses (5Z,8Z,11Z,14Z,17Z)-eicosapentaenoyl-CoA + cholesterol = (5Z,8Z,11Z,14Z,17Z-eicosapentaenoyl)-cholesterol + CoA. It carries out the reaction (9Z,12Z,15Z)-octadecatrienoyl-CoA + cholesterol = (9Z,12Z,15Z-octadecatrienoyl)-cholesterol + CoA. The catalysed reaction is (5Z,8Z,11Z,14Z)-eicosatetraenoyl-CoA + cholesterol = cholesteryl (5Z,8Z,11Z,14Z)-eicosatetraenoate + CoA. Functionally, catalyzes the formation of fatty acid-cholesterol esters, which are less soluble in membranes than cholesterol. Plays a role in lipoprotein assembly and dietary cholesterol absorption. Utilizes oleoyl-CoA ((9Z)-octadecenoyl-CoA) and linolenoyl-CoA ((9Z,12Z,15Z)-octadecatrienoyl-CoA) as substrates. May provide cholesteryl esters for lipoprotein secretion from hepatocytes and intestinal mucosa. This is Sterol O-acyltransferase 2 from Mus musculus (Mouse).